The sequence spans 575 residues: Alpha-(1,6)-fucosyltransferase (575 aa).

Over 1-9 (MRPWTGSWR) the chain is Cytoplasmic. A helical; Signal-anchor for type II membrane protein membrane pass occupies residues 10–30 (WIMLILFAWGTLLFYIGGHLV). Residues 31-575 (RDNDHSDHSS…KYPTYPEADK (545 aa)) lie on the Lumenal side of the membrane. 3 disulfide bridges follow: Cys-204–Cys-266, Cys-212–Cys-230, and Cys-218–Cys-222. The GT23 domain occupies 206–493 (KAKKLVCNIN…PDASANFRSL (288 aa)). Ser-278 carries the post-translational modification Phosphoserine. Positions 299–305 (PRPPYLP) match the SH3-binding motif. The important for donor substrate binding stretch occupies residues 365 to 366 (RR). A disulfide bridge links Cys-465 with Cys-472. The region spanning 502–563 (PNAHNQIAIY…PSYKVREKIE (62 aa)) is the SH3 domain.

The protein belongs to the glycosyltransferase 23 family. Tyrosine phosphorylated by PKDCC/VLK. Highest expression in brain.

The protein resides in the golgi apparatus. The protein localises to the golgi stack membrane. It catalyses the reaction N(4)-{beta-D-GlcNAc-(1-&gt;2)-alpha-D-Man-(1-&gt;3)-[beta-D-GlcNAc-(1-&gt;2)-alpha-D-Man-(1-&gt;6)]-beta-D-Man-(1-&gt;4)-beta-D-GlcNAc-(1-&gt;4)-beta-D-GlcNAc}-L-asparaginyl-[protein] + GDP-beta-L-fucose = an N(4)-{beta-D-GlcNAc-(1-&gt;2)-alpha-D-Man-(1-&gt;3)-[beta-D-GlcNAc-(1-&gt;2)-alpha-D-Man-(1-&gt;6)]-beta-D-Man-(1-&gt;4)-beta-D-GlcNAc-(1-&gt;4)-[alpha-L-Fuc-(1-&gt;6)]-beta-D-GlcNAc}-L-asparaginyl-[protein] + GDP + H(+). The protein operates within protein modification; protein glycosylation. In terms of biological role, catalyzes the addition of fucose in alpha 1-6 linkage to the first GlcNAc residue, next to the peptide chains in N-glycans. This is Alpha-(1,6)-fucosyltransferase (FUT8) from Sus scrofa (Pig).